Here is a 552-residue protein sequence, read N- to C-terminus: ATP synthase subunit alpha (552 aa).

Residue 173–180 (GDRQTGKS) coordinates ATP. The segment at 509–552 (KPQFSGGSKGSNVPKDVDAGATDADDISQEKITTRKGGATAARG) is disordered.

The protein belongs to the ATPase alpha/beta chains family. F-type ATPases have 2 components, CF(1) - the catalytic core - and CF(0) - the membrane proton channel. CF(1) has five subunits: alpha(3), beta(3), gamma(1), delta(1), epsilon(1). CF(0) has three main subunits: a(1), b(2) and c(9-12). The alpha and beta chains form an alternating ring which encloses part of the gamma chain. CF(1) is attached to CF(0) by a central stalk formed by the gamma and epsilon chains, while a peripheral stalk is formed by the delta and b chains.

Its subcellular location is the cell membrane. The enzyme catalyses ATP + H2O + 4 H(+)(in) = ADP + phosphate + 5 H(+)(out). Produces ATP from ADP in the presence of a proton gradient across the membrane. The alpha chain is a regulatory subunit. This Kineococcus radiotolerans (strain ATCC BAA-149 / DSM 14245 / SRS30216) protein is ATP synthase subunit alpha.